A 123-amino-acid chain; its full sequence is Defensin beta 118 (123 aa).

A signal peptide spans Met1–Pro19. Disulfide bonds link Cys27/Cys54, Cys34/Cys48, and Cys38/Cys55. The propeptide occupies Val65–Ser123. Basic and acidic residues predominate over residues Lys100–Arg110. The interval Lys100–Ser123 is disordered. Residues Thr112–Ser123 are compositionally biased toward polar residues.

This sequence belongs to the beta-defensin family. Post-translationally, the three-dimensional structure formed by the three intramolecular disulfide bridges is indispensable for antimicrobial activity. In terms of tissue distribution, high-level and epididymis-specific expression. Most abundant in the epithelium of the caput and present in the epididymis lumen and bound to sperm. Also expressed in pancreas.

It localises to the secreted. Its function is as follows. Host defense peptide that exhibits antimicrobial activity against both Gram-negative bacteria, such as E.coli and S.typhimurium, and Gram-positive bacteria, such as S.aureus and B.subtilis. Inhibits cell adhesion of E.coli on intestinal epithelial enterocytes. Causes rapid permeabilization of both the outer and inner membrane of E.coli, leading to morphological alterations on the bacterial surface. Binds to bacterial lipopolysaccharides (LPS) with high affinity, and may thereby be involved in immunoregulation through LPS neutralization. May contribute to epididymal innate immunity and protect the sperm against attack by microorganisms. The sequence is that of Defensin beta 118 (DEFB118) from Homo sapiens (Human).